The chain runs to 264 residues: MKKVTINDLFMMKNREKIVMITAYDALFARLFDDYVDMILVGDSLNMSFGGKNETIGLSVDDMIYHTKAVQNGAKKAFLVVDMPFGSACTPQIALKNAIKIYKKTGCDAVKIEGTKEMADTIKLLSQNGIIVMSHIGLKPQMSRFEGGYKIKGKDELSAKSILEDAIVLESAGASLFLLEGIVSSVASEISQKLKVPTIGIGSGASCDGQVLVWSDAFGFFDEFKPKFVKRYLEGATLIKNSLKEYADEVKNSKFPSSQYEYTK.

Positions 43 and 82 each coordinate Mg(2+). 3-methyl-2-oxobutanoate contacts are provided by residues 43-44 (DS), Asp82, and Lys111. Glu113 contacts Mg(2+). Glu180 serves as the catalytic Proton acceptor.

The protein belongs to the PanB family. In terms of assembly, homodecamer; pentamer of dimers. It depends on Mg(2+) as a cofactor.

Its subcellular location is the cytoplasm. The catalysed reaction is 3-methyl-2-oxobutanoate + (6R)-5,10-methylene-5,6,7,8-tetrahydrofolate + H2O = 2-dehydropantoate + (6S)-5,6,7,8-tetrahydrofolate. Its pathway is cofactor biosynthesis; (R)-pantothenate biosynthesis; (R)-pantoate from 3-methyl-2-oxobutanoate: step 1/2. Its function is as follows. Catalyzes the reversible reaction in which hydroxymethyl group from 5,10-methylenetetrahydrofolate is transferred onto alpha-ketoisovalerate to form ketopantoate. This Campylobacter fetus subsp. fetus (strain 82-40) protein is 3-methyl-2-oxobutanoate hydroxymethyltransferase.